The chain runs to 897 residues: Leucine--tRNA ligase (897 aa).

The 'HIGH' region signature appears at 42 to 52 (PYPSGKLHMGH). Residues 645–649 (TMSKS) carry the 'KMSKS' region motif. K648 is an ATP binding site.

The protein belongs to the class-I aminoacyl-tRNA synthetase family.

Its subcellular location is the cytoplasm. It carries out the reaction tRNA(Leu) + L-leucine + ATP = L-leucyl-tRNA(Leu) + AMP + diphosphate. The protein is Leucine--tRNA ligase of Paracidovorax citrulli (strain AAC00-1) (Acidovorax citrulli).